A 112-amino-acid polypeptide reads, in one-letter code: Large ribosomal subunit protein P2-B (112 aa).

Residues 89 to 112 form a disordered region; sequence APAAADAKKEEEEEDDDMGFGLFD.

It belongs to the eukaryotic ribosomal protein P1/P2 family. As to quaternary structure, P1 and P2 exist as dimers at the large ribosomal subunit. Phosphorylated.

Functionally, plays an important role in the elongation step of protein synthesis. This chain is Large ribosomal subunit protein P2-B, found in Trypanosoma cruzi.